Reading from the N-terminus, the 48-residue chain is M-oxotoxin-Ot1c (48 aa).

The protein resides in the secreted. Its subcellular location is the target cell membrane. In terms of biological role, disrupts cell membranes, particularly those rich in phosphocholine, through formation of pores. Has antimicrobial activity, hemolytic activity and insecticidal activity. The chain is M-oxotoxin-Ot1c from Oxyopes takobius (Lynx spider).